A 259-amino-acid polypeptide reads, in one-letter code: Undecaprenyl-diphosphatase 3 (259 aa).

A run of 8 helical transmembrane segments spans residues 1 to 21, 39 to 59, 71 to 91, 99 to 119, 133 to 153, 174 to 194, 208 to 228, and 236 to 256; these read MNWL…FLPI, AGLF…FIYY, FSKL…IGLL, ISKT…FLYM, ITYK…FPAI, AYFS…LQFV, SLIV…SWMI, and LKVF…LQFT.

This sequence belongs to the UppP family.

Its subcellular location is the cell membrane. It catalyses the reaction di-trans,octa-cis-undecaprenyl diphosphate + H2O = di-trans,octa-cis-undecaprenyl phosphate + phosphate + H(+). Functionally, catalyzes the dephosphorylation of undecaprenyl diphosphate (UPP). Confers resistance to bacitracin. This is Undecaprenyl-diphosphatase 3 from Bacillus cereus (strain ATCC 10987 / NRS 248).